A 706-amino-acid polypeptide reads, in one-letter code: Maternal embryonic leucine zipper kinase (706 aa).

A Protein kinase domain is found at 11–265; that stretch reads YAVHDELGSG…VKKLLEHDWL (255 aa). Residues 17–25 and K40 each bind ATP; that span reads LGSGGFGKV. D132 serves as the catalytic Proton acceptor. Disordered regions lie at residues 366–386, 433–493, and 506–555; these read LDKSGLEDDDSDPSSISSSSD, FTGR…SRGP, and SVYT…IGSA. 2 stretches are compositionally biased toward polar residues: residues 447-461 and 506-515; these read SVRSSDSASLGSAAT and SVYTTPNTRP. The KA1 domain maps to 656–705; it reads QETVHGWMTVELEIVRLQMFDKVGIRRKRLKGDAFMYKKVCEKILQMAKI.

Belongs to the protein kinase superfamily. CAMK Ser/Thr protein kinase family. SNF1 subfamily. Post-translationally, may be phosphorylated at Thr-169 by par-4 and/or autophosphorylated which likely results in its activation. Phosphorylation is not required for co-localization with the centrosome.

The protein localises to the cytoplasm. It is found in the cytoskeleton. The protein resides in the microtubule organizing center. It localises to the centrosome. It catalyses the reaction L-seryl-[protein] + ATP = O-phospho-L-seryl-[protein] + ADP + H(+). The enzyme catalyses L-threonyl-[protein] + ATP = O-phospho-L-threonyl-[protein] + ADP + H(+). Functionally, serine/threonine-protein kinase involved in cell autonomous neuroblast asymmetric divisions that generate one precursor cell and one apoptotic cell by controlling spindle positioning, myosin distribution and the segregation of cell fate determinants. Plays a role in neural fate specification in several dopaminergic linages, acting in concert with ham-1. Involved in phosphorylation of multiple proteins associated with key developmental processes, including the cell cycle, apoptosis, endocytosis, and asymmetric cell division. Promotes cell shedding during embryogenesis, probably through the endocytosis-mediated removal of cell adhesion molecules such as hmp-1 from the cell surface. May act downstream of par-4/strd-1/mop-25 to regulate cell shedding. This Caenorhabditis elegans protein is Maternal embryonic leucine zipper kinase.